Consider the following 999-residue polypeptide: MFVRKPATERPRLPSVGRLGLFDPHAPAHLDQLGWNTDDHVELLWSLSRAPDADAALLAMVRLADELKDDWDELNRLLLTDRPLRGRLFAVLGSSLALGDHLVAHPQSWRLLHGDVRLPSARELRETFDDAARSVDIERGASAAIPPLRDLYRDRLLVLAALDVASTVENEPVLPFVTVSAHLSDLADAALSAALIVATRTVCGDLDPRLAVIAMGKCGARELNYVSDVDVIFVGEDIEKDGRSDNLATATRVAGEMMRFAGDAFFEVDAALRPEGKRGQLVRTLDSHVAYYRRWAKTWEFQALLKARPAAGDPELGQAYIDALMPMVWTACEREDFVPEVQAMRRRVEELVPADVRSREIKLGTGGLRDVEFAVQLLQLVHGRTDESLHVASTVDALAALGEGGYVGRDDAANMTASYEFLRLLEHRLQLQRLKRTHMLPDDNDDEAYRWLARAAHIRPDGTHDAQGVLREELKRQSLRVSRLHAKLFYQPLLESVGHTALGIGEGMSAEAAERQLAALGYERPQSALAHLAALTGATGRKGRIQQILLPTLLDWLSDTPDPDAGLLAYRRLSDEHSDLRWFLGTLRDEGAVAKRLMRVLGTSAYIPELLMRAPEVIQMYADGPSGPKLLEDDRESRARALVASASRYADPVRAIAAARTLRRRELARIASADVLGMLDVIDVCKSLTAVWVAVLQAALDVVIRANTPDSGVPARIAVIGMGRLGGGELGYGSDADVMFVCEPNSGVEESVAVRWSVGVAEQVRALLGTPSADPPLEVDTGLRPEGRSGPLVRTLASYDAYYSQWAQPWEIQALLRAHRVAGDLELGERFLLMADKIRYPEGGVSASAVQEIRRIKARVDAERLPRGADPNTHTKLGRGGLADIEWTVQLLQLRYAHKVPALHNTSTLEALNAIGAAELVAEGDVELLREAWLTATRARNALVLVRGKPTDQLPGPGRQLNAVALAAGWGSDDGGEFLDNYLRVTRRAKAVVRKIFGG.

The adenylyl removase stretch occupies residues 1-493; sequence MFVRKPATER…LHAKLFYQPL (493 aa). The tract at residues 498-999 is adenylyl transferase; it reads GHTALGIGEG…KAVVRKIFGG (502 aa).

It belongs to the GlnE family. Mg(2+) is required as a cofactor.

It catalyses the reaction [glutamine synthetase]-O(4)-(5'-adenylyl)-L-tyrosine + phosphate = [glutamine synthetase]-L-tyrosine + ADP. The enzyme catalyses [glutamine synthetase]-L-tyrosine + ATP = [glutamine synthetase]-O(4)-(5'-adenylyl)-L-tyrosine + diphosphate. Its function is as follows. Involved in the regulation of glutamine synthetase GlnA, a key enzyme in the process to assimilate ammonia. When cellular nitrogen levels are high, the C-terminal adenylyl transferase (AT) inactivates GlnA by covalent transfer of an adenylyl group from ATP to specific tyrosine residue of GlnA, thus reducing its activity. Conversely, when nitrogen levels are low, the N-terminal adenylyl removase (AR) activates GlnA by removing the adenylyl group by phosphorolysis, increasing its activity. The regulatory region of GlnE binds the signal transduction protein PII (GlnB) which indicates the nitrogen status of the cell. This is Bifunctional glutamine synthetase adenylyltransferase/adenylyl-removing enzyme from Mycolicibacterium smegmatis (strain ATCC 700084 / mc(2)155) (Mycobacterium smegmatis).